The sequence spans 139 residues: Protein archease (139 aa).

D12, D138, and I139 together coordinate Ca(2+).

It belongs to the archease family.

In terms of biological role, activates the tRNA-splicing ligase complex by facilitating the enzymatic turnover of catalytic subunit RtcB. Acts by promoting the guanylylation of RtcB, a key intermediate step in tRNA ligation. Can also alter the NTP specificity of RtcB such that ATP, dGTP or ITP is used efficiently. The polypeptide is Protein archease (Saccharolobus islandicus (strain M.16.27) (Sulfolobus islandicus)).